The chain runs to 291 residues: Probable prolyl 4-hydroxylase 12 (291 aa).

Residues 1-156 lie on the Cytoplasmic side of the membrane; sequence MACLSRIFLI…GEEPSSVLHE (156 aa). Residues 125-239 form the Fe2OG dioxygenase domain; the sequence is NGGSIKVRSY…LLVATKLIYA (115 aa). Residues K142 and D144 each contribute to the Fe cation site. Residues 157–173 traverse the membrane as a helical; Signal-anchor for type II membrane protein segment; it reads SLLATVVLYLSNTTQGG. Topologically, residues 174–291 are lumenal; that stretch reads ELLFPNSEMK…GTCRKSCNAC (118 aa). N-linked (GlcNAc...) asparagine glycosylation is present at N211. H220 is a binding site for Fe cation. The region spanning 251–291 is the ShKT domain; that stretch reads CSDEDENCGRWAKLGECKKNPVYMIGSPDYYGTCRKSCNAC. Disulfide bonds link C251–C291, C258–C284, and C267–C288.

The protein belongs to the P4HA family. Fe(2+) is required as a cofactor. It depends on L-ascorbate as a cofactor.

The protein resides in the endoplasmic reticulum membrane. The catalysed reaction is L-prolyl-[collagen] + 2-oxoglutarate + O2 = trans-4-hydroxy-L-prolyl-[collagen] + succinate + CO2. Catalyzes the post-translational formation of 4-hydroxyproline in -Xaa-Pro-Gly- sequences in proline-rich peptide sequences of plant glycoproteins and other proteins. Hydroxyprolines are important constituent of many plant cell wall glycoproteins such as extensins, hydroxyproline-rich glycoproteins, lectins and arabinogalactan proteins. The sequence is that of Probable prolyl 4-hydroxylase 12 from Arabidopsis thaliana (Mouse-ear cress).